A 452-amino-acid chain; its full sequence is COBRA-like protein 1 (452 aa).

The first 33 residues, 1-33 (MGFFLCSSSSIFFKFGISIIFLVSFSGLTPSEA), serve as a signal peptide directing secretion. N-linked (GlcNAc...) asparagine glycosylation is found at N42, N167, N175, N214, N239, N254, N323, N338, and N357. A lipid anchor (GPI-anchor amidated serine) is attached at S432. The propeptide at 433-452 (VGSLFAAMALLLIVFLHGNL) is removed in mature form.

This sequence belongs to the COBRA family. As to expression, expressed in roots, stems, leaves, flowers and siliques.

It localises to the cell membrane. This Arabidopsis thaliana (Mouse-ear cress) protein is COBRA-like protein 1 (COBL1).